The primary structure comprises 148 residues: Hydrogenase expression/formation protein HoxO (148 aa).

The segment at 128 to 148 (IPVLSPESGTPSCSPMETSES) is disordered. Positions 134–148 (ESGTPSCSPMETSES) are enriched in polar residues.

It belongs to the HupG/HyaE family.

This Azotobacter vinelandii protein is Hydrogenase expression/formation protein HoxO (hoxO).